The sequence spans 410 residues: Imidazolonepropionase (410 aa).

Residues His-71 and His-73 each contribute to the Fe(3+) site. The Zn(2+) site is built by His-71 and His-73. Residues Arg-80, Tyr-143, and His-175 each contribute to the 4-imidazolone-5-propanoate site. Tyr-143 lines the N-formimidoyl-L-glutamate pocket. His-235 is a Fe(3+) binding site. A Zn(2+)-binding site is contributed by His-235. Glu-238 contacts 4-imidazolone-5-propanoate. Asp-309 serves as a coordination point for Fe(3+). A Zn(2+)-binding site is contributed by Asp-309.

This sequence belongs to the metallo-dependent hydrolases superfamily. HutI family. It depends on Zn(2+) as a cofactor. Fe(3+) serves as cofactor.

Its subcellular location is the cytoplasm. The catalysed reaction is 4-imidazolone-5-propanoate + H2O = N-formimidoyl-L-glutamate. The protein operates within amino-acid degradation; L-histidine degradation into L-glutamate; N-formimidoyl-L-glutamate from L-histidine: step 3/3. In terms of biological role, catalyzes the hydrolytic cleavage of the carbon-nitrogen bond in imidazolone-5-propanoate to yield N-formimidoyl-L-glutamate. It is the third step in the universal histidine degradation pathway. The chain is Imidazolonepropionase from Thermoplasma acidophilum (strain ATCC 25905 / DSM 1728 / JCM 9062 / NBRC 15155 / AMRC-C165).